We begin with the raw amino-acid sequence, 477 residues long: Probable periplasmic serine endoprotease DegP-like (477 aa).

Residues 1–27 (MSIPRLKSYLTMFAAVLMLGQVLTAQA) form the signal peptide. Catalysis depends on charge relay system residues H117, D147, and S220. Substrate is bound by residues 218–220 (GNS) and 275–279 (LGVVI). 2 PDZ domains span residues 264 to 355 (LKKD…IRNG) and 361 to 466 (DISV…LRQG).

This sequence belongs to the peptidase S1C family.

It localises to the periplasm. The enzyme catalyses Acts on substrates that are at least partially unfolded. The cleavage site P1 residue is normally between a pair of hydrophobic residues, such as Val-|-Val.. Might be efficient in the degradation of transiently denatured and unfolded proteins which accumulate in the periplasm following stress conditions. The protein is Probable periplasmic serine endoprotease DegP-like of Pseudomonas putida (strain GB-1).